A 4882-amino-acid polypeptide reads, in one-letter code: Dual E2 ubiquitin-conjugating enzyme/E3 ubiquitin-protein ligase BIRC6 (4882 aa).

2 WD repeats span residues 71–109 (DGLHSLSYHPALNAILAVTSRGTIKVIDGTSGATLQASA) and 110–139 (LSAKPGGQVKCQYISAVDKVIFVDDYAVGC). The stretch at 292–362 (RRETFTSWPH…RHSPNCPFVK (71 aa)) is one BIR repeat. The Zn(2+) site is built by Cys331, Cys334, His351, and Cys358. The stretch at 382-429 (LPSADGADRIACFGSGSCPQFLAAATKRGKICIWDVSKLMKVHLKFEI) is one WD 3 repeat. Disordered regions lie at residues 468 to 502 (DIPKLEGDSDDLLEDSDSEEHSRSDSVTGHTSQKE), 542 to 561 (GANPSLTNSKSEKTKEKHQE), and 582 to 622 (ATSP…SELN). Residues 475–485 (DSDDLLEDSDS) are compositionally biased toward acidic residues. A phosphoserine mark is found at Ser476, Ser483, and Ser485. WD repeat units follow at residues 504-723 (MEVS…VQCL), 733-854 (TLCI…QHIK), 855-931 (DPQD…AKVE), and 932-970 (PPKKEGTEEQDTFVSVIYCSGTDRLCACTKGGELHFLQI). Residues 551–561 (KSEKTKEKHQE) show a composition bias toward basic and acidic residues. Over residues 582–591 (ATSPISSNSH) the composition is skewed to polar residues. Phosphoserine is present on residues Ser584 and Ser593. Positions 598 to 622 (SRTQGESISEQGSTDNESCTNSELN) are enriched in polar residues. The disordered stretch occupies residues 1057–1077 (QQQRRHPQHLHQQHHGDAAQH). A compositionally biased stretch (basic residues) spans 1060–1069 (RRHPQHLHQQ). Thr1724 bears the Phosphothreonine mark. Phosphoserine occurs at positions 2245 and 2978. A disordered region spans residues 2969–2998 (VTTNTTDSVSDEEKVSGGKDVNGSSASTPG). Residues 3212-3216 (HRRAR) form an HRRAR loop; important for DIABLO/SMAC and HTRA2 binding region. In terms of domain architecture, Ubiquitin-like spans 3842-4092 (DEKVTMFLQS…ESLLETCPIQ (251 aa)). 2 disordered regions span residues 3908 to 3927 (SEQKDDKEKKNHEEKEKVKA) and 3943 to 3973 (LKSQSKRAMASTPPRPPSRRGRTIPDKIGSA). At Thr3954 the chain carries Phosphothreonine. Residue Ser4047 is modified to Phosphoserine. The tract at residues 4285–4304 (VPNSSLSQTEPQVSNSHNPT) is disordered. Residues 4286-4304 (PNSSLSQTEPQVSNSHNPT) are compositionally biased toward polar residues. The UBC core domain occupies 4598–4765 (ARARRLAQEA…IRQATVKWAM (168 aa)). The active-site Glycyl thioester intermediate is the Cys4691. Residues 4857-4882 (AGAEDTLTHDHVNPSSSKDLPSDFQL) form a disordered region. Positions 4869-4882 (NPSSSKDLPSDFQL) are enriched in polar residues.

The protein belongs to the BIRC6 family. As to quaternary structure, homodimer; antiparallel. Interacts with DIABLO/SMAC, likely with higher affinity to SMAC dimer than SMAC monomer; this interaction blocks the substrate-binding site and inhibits the caspase inhibition activity of BIRC6. Interacts with RNF41, KIF23/MKLP1, USP8/UBPY, BIRC5/survivin, MAP2K1/MEK1, RAB8A/RAB8, RAB11A/RAB11, PLK1, EXOC3/SEC6 and EXOC4/SEC8. In terms of processing, ubiquitinated. Ubiquitination is mediated by RNF41 E3 ligase and leads to proteasomal degradation, impairing inhibition of apoptosis. Deubiquitinated by USP8/UBPY. Autoubiquitinated; mediated by E1 ubiquitin activating enzyme UBA6. Post-translationally, proteolytically cleaved. Acts as substrate for CASP3, CASP6, CASP7, CASP9 and HTRA2. In terms of tissue distribution, widely expressed. Highly expressed in the brain and kidney.

The protein localises to the golgi apparatus. Its subcellular location is the trans-Golgi network membrane. It is found in the endosome. It localises to the cytoplasm. The protein resides in the cytoskeleton. The protein localises to the spindle pole. Its subcellular location is the microtubule organizing center. It is found in the centrosome. It localises to the midbody. The protein resides in the midbody ring. The catalysed reaction is S-ubiquitinyl-[E1 ubiquitin-activating enzyme]-L-cysteine + [acceptor protein]-L-lysine = [E1 ubiquitin-activating enzyme]-L-cysteine + N(6)-monoubiquitinyl-[acceptor protein]-L-lysine.. Its activity is regulated as follows. Inhibited by DIABLO/SMAC, which competes for the substrate-binding sites on BIRC6. BIRC6 inhibits caspases and protease by ubiquitination but BIRC6 itself is subjected to protease cleavage by CASP3, CASP6, CASP7, CASP9 and HTRA2 by protease cleavage. In terms of biological role, anti-apoptotic protein known as inhibitor of apoptosis (IAP) which can regulate cell death by controlling caspases and by acting as an E3 ubiquitin-protein ligase. Unlike most IAPs, does not contain a RING domain and it is not a RING-type E3 ligase. Instead acts as a dual E2/E3 enzyme that combines ubiquitin conjugating (E2) and ubiquitin ligase (E3) activities in a single polypeptide. Ubiquitination is mediated by a non-canonical E1 ubiquitin activating enzyme UBA6. Ubiquitinates CASP3, CASP7 and CASP9 and inhibits their caspase activity; also ubiquitinates their procaspases but to a weaker extent. Ubiquitinates pro-apoptotic factors DIABLO/SMAC and HTRA2. DIABLO/SMAC antagonizes the caspase inhibition activity of BIRC6 by competing for the same binding sites as the caspases. Ubiquitinates the autophagy protein MAP1LC3B; this activity is also inhibited by DIABLO/SMAC. Important regulator for the final stages of cytokinesis. Crucial for normal vesicle targeting to the site of abscission, but also for the integrity of the midbody and the midbody ring, and its striking ubiquitin modification. Required for normal placenta development. This chain is Dual E2 ubiquitin-conjugating enzyme/E3 ubiquitin-protein ligase BIRC6 (Birc6), found in Mus musculus (Mouse).